Consider the following 397-residue polypeptide: Acetyl-CoA acetyltransferase, cytosolic (397 aa).

Position 1 is an N-acetylmethionine (methionine 1). The Acyl-thioester intermediate role is filled by cysteine 92. An N6-acetyllysine modification is found at lysine 200. The CoA site is built by arginine 223 and serine 226. Residues lysine 233 and lysine 235 each carry the N6-acetyllysine modification. Serine 252 contacts CoA. The active-site Proton donor/acceptor is the cysteine 383.

It belongs to the thiolase-like superfamily. Thiolase family. In terms of assembly, homotetramer.

Its subcellular location is the cytoplasm. It is found in the cytosol. It catalyses the reaction 2 acetyl-CoA = acetoacetyl-CoA + CoA. The protein operates within lipid metabolism; fatty acid metabolism. Functionally, involved in the biosynthetic pathway of cholesterol. The protein is Acetyl-CoA acetyltransferase, cytosolic (Acat2) of Rattus norvegicus (Rat).